The sequence spans 525 residues: Asparagine synthetase domain-containing protein YML096W (525 aa).

The active-site For GATase activity is Cys2. A Glutamine amidotransferase type-2 domain is found at 2–209 (CGILLHYCPN…LNSNQRSHLP (208 aa)). An Asparagine synthetase domain is found at 210–523 (YEVTSEIDLN…GTDLLKENRN (314 aa)). The disordered stretch occupies residues 503-525 (SAKMTKDGNKHGTDLLKENRNCS). A compositionally biased stretch (basic and acidic residues) spans 506 to 525 (MTKDGNKHGTDLLKENRNCS).

The protein resides in the cytoplasm. The polypeptide is Asparagine synthetase domain-containing protein YML096W (Saccharomyces cerevisiae (strain ATCC 204508 / S288c) (Baker's yeast)).